A 370-amino-acid chain; its full sequence is 3-isopropylmalate dehydrogenase (370 aa).

Residue 77–90 (GPKWDAVPYEVRPE) participates in NAD(+) binding. Substrate contacts are provided by Arg-97, Arg-107, Arg-135, and Asp-226. Residues Asp-226, Asp-250, and Asp-254 each coordinate Mg(2+). 290 to 302 (GSAPDIAGTGVAN) contributes to the NAD(+) binding site.

Belongs to the isocitrate and isopropylmalate dehydrogenases family. LeuB type 1 subfamily. In terms of assembly, homodimer. Requires Mg(2+) as cofactor. Mn(2+) is required as a cofactor.

Its subcellular location is the cytoplasm. It carries out the reaction (2R,3S)-3-isopropylmalate + NAD(+) = 4-methyl-2-oxopentanoate + CO2 + NADH. Its pathway is amino-acid biosynthesis; L-leucine biosynthesis; L-leucine from 3-methyl-2-oxobutanoate: step 3/4. Its function is as follows. Catalyzes the oxidation of 3-carboxy-2-hydroxy-4-methylpentanoate (3-isopropylmalate) to 3-carboxy-4-methyl-2-oxopentanoate. The product decarboxylates to 4-methyl-2 oxopentanoate. The sequence is that of 3-isopropylmalate dehydrogenase from Rhizobium meliloti (strain 1021) (Ensifer meliloti).